Here is a 398-residue protein sequence, read N- to C-terminus: MLSVAELTRGLSDLVEDRYDDVWVEGELSDFTRAASGHCYFSLKDEDAQIRCVMWKHLTQYVYFEPEEGMQVRVNGHASVYERRGDLQIQAQAMRQAGKGAQQKAFEELKQTLQAEGLFAPERKQALPAFPDTIGVVTSGQGAAIHDIQSGLARRFPPAEVVLCPVKVQGLDAPRAVADAVAAFNDLPADDAQRPDLLIVGRGGGSTEDLWAFNEEVVARALDASNLPVVSAVGHESDVTIADLVADERAATPSAAAERVVPDRRDVADRVRALHDRLRSRVTGRLQDARQRVDALVASRAFHAPARRLEQHRQHLDALVDRLGRGGARAVDRARTRLAHLRDRLHALDPEQPLRRGYVHLTQDGTSVQSAESLQDGDRVRLHFQDGRRDAEVLPDDG.

The protein belongs to the XseA family. In terms of assembly, heterooligomer composed of large and small subunits.

The protein resides in the cytoplasm. It carries out the reaction Exonucleolytic cleavage in either 5'- to 3'- or 3'- to 5'-direction to yield nucleoside 5'-phosphates.. Functionally, bidirectionally degrades single-stranded DNA into large acid-insoluble oligonucleotides, which are then degraded further into small acid-soluble oligonucleotides. In Salinibacter ruber (strain DSM 13855 / M31), this protein is Exodeoxyribonuclease 7 large subunit.